A 460-amino-acid polypeptide reads, in one-letter code: Phosphomethylpyrimidine synthase (460 aa).

Residues Asn-80, Met-109, Tyr-139, His-175, 195–197, 236–239, and Glu-275 each bind substrate; these read SRG and DSLR. A Zn(2+)-binding site is contributed by His-279. Tyr-302 contacts substrate. Position 343 (His-343) interacts with Zn(2+). [4Fe-4S] cluster-binding residues include Cys-423, Cys-426, and Cys-431.

It belongs to the ThiC family. [4Fe-4S] cluster is required as a cofactor.

The enzyme catalyses 5-amino-1-(5-phospho-beta-D-ribosyl)imidazole + S-adenosyl-L-methionine = 4-amino-2-methyl-5-(phosphooxymethyl)pyrimidine + CO + 5'-deoxyadenosine + formate + L-methionine + 3 H(+). It participates in cofactor biosynthesis; thiamine diphosphate biosynthesis. Catalyzes the synthesis of the hydroxymethylpyrimidine phosphate (HMP-P) moiety of thiamine from aminoimidazole ribotide (AIR) in a radical S-adenosyl-L-methionine (SAM)-dependent reaction. This is Phosphomethylpyrimidine synthase from Rippkaea orientalis (strain PCC 8801 / RF-1) (Cyanothece sp. (strain PCC 8801)).